Reading from the N-terminus, the 222-residue chain is Ribonuclease S-3 (222 aa).

The N-terminal stretch at 1 to 22 (MVHVVMMVFLLIVLILCSSTVG) is a signal peptide. Q31 serves as a coordination point for RNA. A disulfide bridge links C37 with C44. Residue N40 is glycosylated (N-linked (GlcNAc...) asparagine). RNA-binding positions include H55, 92 to 93 (NV), F102, 105 to 106 (KE), and 109 to 110 (KH). H55 functions as the Proton donor in the catalytic mechanism. Cysteines 70 and 113 form a disulfide. Residues E106 and K109 contribute to the active site. The active-site Proton acceptor is H110. N-linked (GlcNAc...) asparagine glycosylation occurs at N138. Disulfide bonds link C177-C215 and C192-C203.

This sequence belongs to the RNase T2 family. In terms of processing, N-linked core structure at Asn-138 contains xylose.

The catalysed reaction is a ribonucleotidyl-ribonucleotide-RNA + H2O = a 3'-end 3'-phospho-ribonucleotide-RNA + a 5'-end dephospho-ribonucleoside-RNA + H(+). In terms of biological role, self-incompatibility (SI) is the inherited ability of a flowering plant to prevent self-fertilization by discriminating between self and non-self pollen during pollination. In many species, self-incompatibility is controlled by the single, multiallelic locus S. This chain is Ribonuclease S-3, found in Pyrus pyrifolia (Chinese pear).